The sequence spans 82 residues: Protein C14 (82 aa).

The sequence is that of Protein C14 from Homo sapiens (Human).